We begin with the raw amino-acid sequence, 116 residues long: MATVPALNAYRHLMRAARIAFQGDTQILSAAQVQIRNEFRQKASIDSTGASAAIQHAEEVAKVLRENVVQGKKTEEGKDTYKLRIHEHTERGDNESILTAGSGNTTGGGCCGGGGR.

The interval 89 to 116 (TERGDNESILTAGSGNTTGGGCCGGGGR) is disordered. Residues 104–116 (NTTGGGCCGGGGR) are compositionally biased toward gly residues.

The protein belongs to the complex I LYR family. MZM1 subfamily. In terms of assembly, interacts with RIP1.

It localises to the mitochondrion matrix. Its function is as follows. Assembly factor required for Rieske Fe-S protein RIP1 incorporation into the cytochrome b-c1 (CIII) complex. Functions as a chaperone, binding to this subunit within the mitochondrial matrix and stabilizing it prior to its translocation and insertion into the late CIII dimeric intermediate within the mitochondrial inner membrane. Modulates the mitochondrial matrix zinc pool. This is Mitochondrial zinc maintenance protein 1, mitochondrial (MZM1) from Fusarium vanettenii (strain ATCC MYA-4622 / CBS 123669 / FGSC 9596 / NRRL 45880 / 77-13-4) (Fusarium solani subsp. pisi).